The following is a 491-amino-acid chain: Neuronal acetylcholine receptor subunit beta-2 (491 aa).

The signal sequence occupies residues M1–C18. Topologically, residues T19–K226 are extracellular. Residues N44 and N161 are each glycosylated (N-linked (GlcNAc...) asparagine). C148 and C162 are disulfide-bonded. Residues P227–L251 form a helical membrane-spanning segment. Over P252–K258 the chain is Cytoplasmic. A helical transmembrane segment spans residues M259–S277. Residues K278–K292 lie on the Extracellular side of the membrane. Residues Y293 to V314 traverse the membrane as a helical segment. The Cytoplasmic segment spans residues H315 to R449. The helical transmembrane segment at L450–L468 threads the bilayer.

It belongs to the ligand-gated ion channel (TC 1.A.9) family. Acetylcholine receptor (TC 1.A.9.1) subfamily. Beta-2/CHRNB2 sub-subfamily. Neuronal AChR is a heteropentamer composed of two different types of subunits: alpha and beta. CHRNB2/Beta-2 subunit can be combined to CHRNA2/alpha-2, CHRNA3/alpha-3 or CHRNA4/alpha-4, CHRNA5/alpha-5, CHRNA6/alpha-6 and CHRNB3/beta-3 to give rise to functional receptors.

It localises to the synaptic cell membrane. The protein localises to the cell membrane. It catalyses the reaction Ca(2+)(in) = Ca(2+)(out). It carries out the reaction K(+)(in) = K(+)(out). The catalysed reaction is Na(+)(in) = Na(+)(out). With respect to regulation, activated by a myriad of ligands such as acetylcholine, cytisine, nicotine, choline and epibatidine. nAChR activity is inhibited by the antagonist alpha-conotoxins BuIA, PnIA, PnIC, GID and MII, small disulfide-constrained peptides from cone snails. In terms of biological role, component of neuronal acetylcholine receptors (nAChRs) that function as pentameric, ligand-gated cation channels with high calcium permeability among other activities. nAChRs are excitatory neurotrasnmitter receptors formed by a collection of nAChR subunits known to mediate synaptic transmission in the nervous system and the neuromuscular junction. Each nAchR subunit confers differential attributes to channel properties, including activation, deactivation and desensitization kinetics, pH sensitivity, cation permeability, and binding to allosteric modulators. CHRNB2 forms heteropentameric neuronal acetylcholine receptors with CHRNA2, CHRNA3, CHRNA4 and CHRNA6, as well as CHRNA5 and CHRNB3 as accesory subunits. The polypeptide is Neuronal acetylcholine receptor subunit beta-2 (CHRNB2) (Gallus gallus (Chicken)).